The sequence spans 428 residues: uncharacterized protein (428 aa).

This is an uncharacterized protein from Treponema pallidum (strain Nichols).